Reading from the N-terminus, the 258-residue chain is (7aS)-7a-methyl-1,5-dioxo-2,3,5,6,7,7a-hexahydro-1H-indene-carboxyl-CoA hydrolase (258 aa).

Belongs to the enoyl-CoA hydratase/isomerase family.

It carries out the reaction (7aS)-7a-methyl-1,5-dioxo-2,3,5,6,7,7a-hexahydro-1H-indene-carboxyl-CoA + H2O = (3E)-2-(2-carboxylatoethyl)-3-methyl-6-oxocyclohex-1-ene-1-carboxyl-CoA + H(+). Its pathway is steroid metabolism; cholesterol degradation. Its function is as follows. Involved in the final steps of cholesterol and steroid degradation. Catalyzes the hydrolytic ring D opening of (7aS)-7a-methyl-1,5-dioxo-2,3,5,6,7,7a-hexahydro-1H-indene-carboxyl-CoA (HIEC-CoA) to (3E)-2-(2-carboxylatoethyl)-3-methyl-6-oxocyclohex-1-ene-1-carboxyl-CoA (COCHEA-CoA). This Rhodococcus jostii (strain RHA1) protein is (7aS)-7a-methyl-1,5-dioxo-2,3,5,6,7,7a-hexahydro-1H-indene-carboxyl-CoA hydrolase.